The following is a 199-amino-acid chain: Ras-related and estrogen-regulated growth inhibitor (199 aa).

GTP contacts are provided by residues 13–20 (GRAGVGKS), 60–64 (DTAGQ), and 118–121 (NKAD).

The protein belongs to the small GTPase superfamily. Ras family. As to expression, detected in heart, brain, placenta, lung, liver, skin, kidney and pancreas. Detected in estrogen receptor-positive breast-derived cell lines, but not in estrogen receptor-negative cell lines. Expression is decreased or lost in a significant proportion of primary breast tumors with poor clinical prognosis.

Its subcellular location is the cytoplasm. It catalyses the reaction GTP + H2O = GDP + phosphate + H(+). Binds GDP/GTP and possesses intrinsic GTPase activity. Has higher affinity for GDP than for GTP. In cell lines overexpression leads to a reduction in the rate of proliferation, colony formation and in tumorigenic potential. The polypeptide is Ras-related and estrogen-regulated growth inhibitor (RERG) (Homo sapiens (Human)).